We begin with the raw amino-acid sequence, 407 residues long: M protein, serotype 2.1 (407 aa).

Positions 1 to 41 (MARKDTNKQYSLRKLKTGTASVAVAVAVLGAGFANQTTVKA) are cleaved as a signal peptide. Residues 81-94 (VEEEHKKVEEEHKK) form a 2 X 7 AA tandem repeats region. Composition is skewed to basic and acidic residues over residues 83-144 (EEHK…KRYQ), 152-229 (QLEK…EKQI), 237-264 (LSRD…EKQI), and 272-288 (LSRD…KVEA). The interval 83 to 289 (EEHKKVEEEH…REAKKKVEAD (207 aa)) is disordered. C repeat units follow at residues 151–185 (QQLE…EAEH), 186–220 (QKLK…EAEH), 221–255 (QKLK…EAEH), and 256–290 (QKLK…EADL). 4 D repeats span residues 323–328 (AKLEAE), 329–334 (AKALKE), 337–342 (AKQAEE), and 344–349 (AKLKGN). Positions 344–382 (AKLKGNQTPNAKVAPQANRSRSAMTQQKRTLPSTGETAN) are disordered. Residues 360-380 (ANRSRSAMTQQKRTLPSTGET) are compositionally biased toward polar residues. An LPXTG sorting signal motif is present at residues 374–378 (LPSTG). Threonine 377 is subject to Pentaglycyl murein peptidoglycan amidated threonine. Positions 378–407 (GETANPFFTAAAATVMVSAGMLALKRKEEN) are cleaved as a propeptide — removed by sortase.

This sequence belongs to the M protein family.

It is found in the secreted. Its subcellular location is the cell wall. Its function is as follows. This protein is one of the different antigenic serotypes of protein M. Protein M is closely associated with virulence of the bacterium and can render the organism resistant to phagocytosis. In Streptococcus pyogenes, this protein is M protein, serotype 2.1 (emmL2.1).